Here is a 427-residue protein sequence, read N- to C-terminus: Protein TolB homolog (427 aa).

Residues 1-20 (MLRRIFVSTFLVFGIVSLYA) form the signal peptide.

This sequence belongs to the TolB family.

The protein localises to the periplasm. The chain is Protein TolB homolog from Chlamydia caviae (strain ATCC VR-813 / DSM 19441 / 03DC25 / GPIC) (Chlamydophila caviae).